Here is a 237-residue protein sequence, read N- to C-terminus: Orotidine 5'-phosphate decarboxylase (237 aa).

Residues D17, K39, D66–T75, T121, R182, Q191, G211, and R212 contribute to the substrate site. Residue K68 is the Proton donor of the active site.

Belongs to the OMP decarboxylase family. Type 1 subfamily. Homodimer.

The enzyme catalyses orotidine 5'-phosphate + H(+) = UMP + CO2. It participates in pyrimidine metabolism; UMP biosynthesis via de novo pathway; UMP from orotate: step 2/2. Functionally, catalyzes the decarboxylation of orotidine 5'-monophosphate (OMP) to uridine 5'-monophosphate (UMP). The polypeptide is Orotidine 5'-phosphate decarboxylase (Bradyrhizobium diazoefficiens (strain JCM 10833 / BCRC 13528 / IAM 13628 / NBRC 14792 / USDA 110)).